A 468-amino-acid polypeptide reads, in one-letter code: Chromosomal replication initiator protein DnaA (468 aa).

Residues 1-84 (MSSSLWLQCL…RFEVGSRPVS (84 aa)) form a domain I, interacts with DnaA modulators region. The tract at residues 80 to 106 (SRPVSAPKPAPTRTPADVAAESSAPAQ) is disordered. The domain II stretch occupies residues 84-131 (SAPKPAPTRTPADVAAESSAPAQLQARKPVHKTWDDDPQAIAAINHRS). Residues 132–348 (NMNPKHKFDN…GALNRVIANA (217 aa)) form a domain III, AAA+ region region. Residues Gly-176, Gly-178, Lys-179, and Thr-180 each coordinate ATP. A domain IV, binds dsDNA region spans residues 349 to 468 (NFTGRPITID…YSNLIRTLSS (120 aa)).

It belongs to the DnaA family. Oligomerizes as a right-handed, spiral filament on DNA at oriC.

It localises to the cytoplasm. Its function is as follows. Plays an essential role in the initiation and regulation of chromosomal replication. ATP-DnaA binds to the origin of replication (oriC) to initiate formation of the DNA replication initiation complex once per cell cycle. Binds the DnaA box (a 9 base pair repeat at the origin) and separates the double-stranded (ds)DNA. Forms a right-handed helical filament on oriC DNA; dsDNA binds to the exterior of the filament while single-stranded (ss)DNA is stabiized in the filament's interior. The ATP-DnaA-oriC complex binds and stabilizes one strand of the AT-rich DNA unwinding element (DUE), permitting loading of DNA polymerase. After initiation quickly degrades to an ADP-DnaA complex that is not apt for DNA replication. Binds acidic phospholipids. This is Chromosomal replication initiator protein DnaA from Vibrio parahaemolyticus serotype O3:K6 (strain RIMD 2210633).